Reading from the N-terminus, the 101-residue chain is Small ribosomal subunit protein uS14A (101 aa).

Residues 28–57 (KDIIRSPSSAPEQRSTAQRALARQPRDASP) form a disordered region. Over residues 33 to 45 (SPSSAPEQRSTAQ) the composition is skewed to polar residues.

The protein belongs to the universal ribosomal protein uS14 family. As to quaternary structure, part of the 30S ribosomal subunit. Contacts proteins S3 and S10.

Functionally, binds 16S rRNA, required for the assembly of 30S particles and may also be responsible for determining the conformation of the 16S rRNA at the A site. The sequence is that of Small ribosomal subunit protein uS14A from Mycobacterium bovis (strain ATCC BAA-935 / AF2122/97).